We begin with the raw amino-acid sequence, 137 residues long: Thionin BTH7 (137 aa).

The signal sequence occupies residues M1–G28. 4 disulfides stabilise this stretch: C31/C68, C32/C60, C40/C58, and C44/C54. A propeptide spans L75 to A137 (acidic domain).

Belongs to the plant thionin (TC 1.C.44) family. 4 C-C subfamily.

Its subcellular location is the secreted. Functionally, thionins are small plant proteins which are toxic to animal cells. They seem to exert their toxic effect at the level of the cell membrane. Their precise function is not known. The polypeptide is Thionin BTH7 (Hordeum vulgare (Barley)).